Here is a 366-residue protein sequence, read N- to C-terminus: uncharacterized protein (366 aa).

Positions 63–288 constitute an OBG-type G domain; that stretch reads ARVAMVGFPS…LLEKMWEYLA (226 aa). GTP is bound by residues 69–76, 115–119, and 246–249; these read GFPSVGKS, DLPGI, and NKVD. Positions 288–365 constitute a TGS domain; it reads ALVRVYTKKP…DHEDVIQIVK (78 aa).

This sequence belongs to the TRAFAC class OBG-HflX-like GTPase superfamily. OBG GTPase family.

This is an uncharacterized protein from Caenorhabditis elegans.